The sequence spans 1037 residues: Importin-8 (1037 aa).

Positions 22 to 102 (AENELNQSYK…RDNIVEGIIR (81 aa)) constitute an Importin N-terminal domain. Residues 886-895 (DRSKAEKADM) show a composition bias toward basic and acidic residues. Residues 886–934 (DRSKAEKADMEENEEISSDEEETNVTAQAMQSNNGRGEDEEEEDDDWDE) are disordered. Over residues 896–908 (EENEEISSDEEET) the composition is skewed to acidic residues. Serine 902 and serine 903 each carry phosphoserine. A compositionally biased stretch (polar residues) spans 909-920 (NVTAQAMQSNNG). Residues 923 to 934 (EDEEEEDDDWDE) are compositionally biased toward acidic residues.

It belongs to the importin beta family. Forms a heterodimer with KPNB1. Interacts with SRP19. Interacts with RPL23A. Binds directly to nuclear pore complexes. Interacts with LRPPRC; the interaction occurs when LRPPRC is in its RNA-free form and promotes import of LRPPRC to the nucleus to allow for EIF4E-mediated export of mRNAS from the nucleus to the cytoplasm.

It localises to the cytoplasm. It is found in the nucleus. Involved in nuclear protein import, either by acting as autonomous nuclear transport receptor or as an adapter-like protein in association with the importin-beta subunit KPNB1. Acting autonomously, may serve as receptor for nuclear localization signals (NLS) and promote translocation of import substrates through the nuclear pore complex (NPC) by an energy requiring, Ran-dependent mechanism. At the nucleoplasmic side of the NPC, Ran binds to importin, the importin/substrate complex dissociates and importin is re-exported from the nucleus to the cytoplasm where GTP hydrolysis releases Ran. The directionality of nuclear import is thought to be conferred by an asymmetric distribution of the GTP- and GDP-bound forms of Ran between the cytoplasm and nucleus. In vitro mediates the nuclear import of the signal recognition particle protein SRP19. May also be involved in cytoplasm-to-nucleus shuttling of a broad spectrum of other cargos, including Argonaute-microRNAs complexes, the JUN protein, RELA/NF-kappa-B p65 subunit, the translation initiation factor EIF4E and a set of receptor-activated mothers against decapentaplegic homolog (SMAD) transcription factors that play a critical role downstream of the large family of transforming growth factor beta and bone morphogenetic protein (BMP) cytokines. In Homo sapiens (Human), this protein is Importin-8 (IPO8).